We begin with the raw amino-acid sequence, 219 residues long: Tegument protein UL14 (219 aa).

The tract at residues 161-219 (ANGPSRIGSHPTYTPTPTGPPGAPAAPLSRTPPSPAPPTGPATDPASASGFARDYPDGE) is disordered. The span at 177 to 200 (PTGPPGAPAAPLSRTPPSPAPPTG) shows a compositional bias: pro residues.

The protein belongs to the alphaherpesvirinae HHV-1 UL14 protein family. In terms of assembly, interacts with UL51. In terms of processing, phosphorylated.

It localises to the virion tegument. The protein resides in the host cytoplasm. It is found in the host nucleus. Its function is as follows. Contributes to the nuclear transport of the viral transcriptional activator VP16 during the early phase of infection. Therefore, participates indirectly in the regulation of the immediate-early gene expression. Additionally, seems to be important for efficient nuclear targeting of capsids. The UL51-UL14 complex regulates final viral envelopment for efficient viral replication. This is Tegument protein UL14 from Human herpesvirus 1 (strain 17) (HHV-1).